A 566-amino-acid polypeptide reads, in one-letter code: Protein pacG (566 aa).

Positions 79–326 (TSFDPPPPAE…RSPRNFQSRK (248 aa)) form a DNA-binding region, NDT80. 2 disordered regions span residues 314-422 (VRGR…EAHR) and 448-470 (DSRPHTSFSNDLASKSLSVDSGR). The span at 333–349 (SAAASRKNAQAAAASNN) shows a compositional bias: low complexity. Composition is skewed to polar residues over residues 365-391 (VKSSSPETSSNGVPQQSPPNWALATNS), 403-413 (HSSVYSQSSPE), and 452-466 (HTSFSNDLASKSLSV).

Its subcellular location is the nucleus. It localises to the cytoplasm. Functionally, transcription factor that acts as a positive regulator of nonrepressible acid phosphatase activity. Is a major regulator of responses to nitrogen and carbon starvation and is essential for the expression of genes involved in vegetative incompatibility (like pin-c, het-6, and tol). Vegetative incompatibility is a non-self-recognition system ubiquitous in filamentous fungi which results in programmed cell death. This is Protein pacG (pacG) from Emericella nidulans (strain FGSC A4 / ATCC 38163 / CBS 112.46 / NRRL 194 / M139) (Aspergillus nidulans).